The primary structure comprises 432 residues: Glutamate-1-semialdehyde 2,1-aminomutase (432 aa).

Lysine 265 carries the post-translational modification N6-(pyridoxal phosphate)lysine.

Belongs to the class-III pyridoxal-phosphate-dependent aminotransferase family. HemL subfamily. As to quaternary structure, homodimer. Pyridoxal 5'-phosphate serves as cofactor.

It is found in the cytoplasm. It catalyses the reaction (S)-4-amino-5-oxopentanoate = 5-aminolevulinate. It participates in porphyrin-containing compound metabolism; protoporphyrin-IX biosynthesis; 5-aminolevulinate from L-glutamyl-tRNA(Glu): step 2/2. This chain is Glutamate-1-semialdehyde 2,1-aminomutase, found in Photobacterium profundum (strain SS9).